The following is a 96-amino-acid chain: Protein RnfH (96 aa).

This sequence belongs to the UPF0125 (RnfH) family.

The polypeptide is Protein RnfH (Shigella flexneri).